The following is a 124-amino-acid chain: UPF0357 protein C1687.07 (124 aa).

The signal sequence occupies residues 1 to 24 (MASFHIIVSYVTVVLAIIIAITFA).

This sequence belongs to the UPF0357 family.

The polypeptide is UPF0357 protein C1687.07 (Schizosaccharomyces pombe (strain 972 / ATCC 24843) (Fission yeast)).